The primary structure comprises 363 residues: Anhydro-N-acetylmuramic acid kinase (363 aa).

9 to 16 provides a ligand contact to ATP; the sequence is GTSLDGID.

It belongs to the anhydro-N-acetylmuramic acid kinase family.

It carries out the reaction 1,6-anhydro-N-acetyl-beta-muramate + ATP + H2O = N-acetyl-D-muramate 6-phosphate + ADP + H(+). The protein operates within amino-sugar metabolism; 1,6-anhydro-N-acetylmuramate degradation. Its pathway is cell wall biogenesis; peptidoglycan recycling. Its function is as follows. Catalyzes the specific phosphorylation of 1,6-anhydro-N-acetylmuramic acid (anhMurNAc) with the simultaneous cleavage of the 1,6-anhydro ring, generating MurNAc-6-P. Is required for the utilization of anhMurNAc either imported from the medium or derived from its own cell wall murein, and thus plays a role in cell wall recycling. This Nitrosomonas europaea (strain ATCC 19718 / CIP 103999 / KCTC 2705 / NBRC 14298) protein is Anhydro-N-acetylmuramic acid kinase.